Here is a 176-residue protein sequence, read N- to C-terminus: RNA 2',3'-cyclic phosphodiesterase (176 aa).

Residue histidine 43 is the Proton donor of the active site. Short sequence motifs (HXTX) lie at residues 43–46 (HLTL) and 125–128 (HITL). Histidine 125 (proton acceptor) is an active-site residue.

This sequence belongs to the 2H phosphoesterase superfamily. ThpR family. Monomer.

The catalysed reaction is a 3'-end 2',3'-cyclophospho-ribonucleotide-RNA + H2O = a 3'-end 2'-phospho-ribonucleotide-RNA + H(+). Hydrolyzes RNA 2',3'-cyclic phosphodiester to an RNA 2'-phosphomonoester. In vitro, can also ligate 5' and 3' half-tRNA molecules with 2',3'-cyclic phosphate and 5'-hydroxyl termini, respectively, to the product containing the 2'-5' phosphodiester linkage. This reaction does not require ATP and is reversible. This chain is RNA 2',3'-cyclic phosphodiesterase, found in Escherichia coli (strain K12).